Here is a 400-residue protein sequence, read N- to C-terminus: Serine/threonine transporter SstT (400 aa).

9 consecutive transmembrane segments (helical) span residues 14-34 (IIIAIILGIGVALLFPTVTPY), 48-68 (SVAPILVFVLVLSSIANFQVG), 76-96 (VLLLYVVGMLLAAFSAVIASL), 136-156 (AISEANFIGILAWAIGLGLAM), 177-197 (IIHKVIAFAPVGIFGLVAVTF), 211-231 (LLAVLLGTMLFVALVINPILV), 285-305 (IPLGATVNMAGAAVTITVLTL), 311-331 (LGIHVDLATMIILSVVATISA), and 349-371 (CSLFGISSEIAMQVVAVGMIISV).

Belongs to the dicarboxylate/amino acid:cation symporter (DAACS) (TC 2.A.23) family.

It localises to the cell inner membrane. The catalysed reaction is L-serine(in) + Na(+)(in) = L-serine(out) + Na(+)(out). The enzyme catalyses L-threonine(in) + Na(+)(in) = L-threonine(out) + Na(+)(out). Functionally, involved in the import of serine and threonine into the cell, with the concomitant import of sodium (symport system). The sequence is that of Serine/threonine transporter SstT from Acinetobacter baumannii (strain ATCC 17978 / DSM 105126 / CIP 53.77 / LMG 1025 / NCDC KC755 / 5377).